The chain runs to 76 residues: CLAVATA3/ESR (CLE)-related protein 46 (76 aa).

The signal sequence occupies residues 1 to 26 (MRRHDIIIKLLLLMCLLLSRFVTREC). The tract at residues 53 to 76 (EEKKWHKHPSGPNPTGNRHPPVKH) is disordered. Residues Pro-61 and Pro-64 each carry the hydroxyproline modification. O-linked (Ara...) hydroxyproline glycosylation occurs at Pro-64.

Belongs to the CLV3/ESR signal peptide family. Post-translationally, the O-glycosylation (arabinosylation) of the hydroxyproline Pro-64 enhances binding affinity of the CLE46p peptide for its receptor.

It localises to the secreted. Its subcellular location is the extracellular space. Functionally, extracellular signal peptide that regulates cell fate. The sequence is that of CLAVATA3/ESR (CLE)-related protein 46 from Arabidopsis thaliana (Mouse-ear cress).